The sequence spans 456 residues: Probable glycine dehydrogenase (decarboxylating) subunit 1 (456 aa).

It belongs to the GcvP family. N-terminal subunit subfamily. The glycine cleavage system is composed of four proteins: P, T, L and H. In this organism, the P 'protein' is a heterodimer of two subunits.

The catalysed reaction is N(6)-[(R)-lipoyl]-L-lysyl-[glycine-cleavage complex H protein] + glycine + H(+) = N(6)-[(R)-S(8)-aminomethyldihydrolipoyl]-L-lysyl-[glycine-cleavage complex H protein] + CO2. In terms of biological role, the glycine cleavage system catalyzes the degradation of glycine. The P protein binds the alpha-amino group of glycine through its pyridoxal phosphate cofactor; CO(2) is released and the remaining methylamine moiety is then transferred to the lipoamide cofactor of the H protein. This Legionella pneumophila subsp. pneumophila (strain Philadelphia 1 / ATCC 33152 / DSM 7513) protein is Probable glycine dehydrogenase (decarboxylating) subunit 1.